Here is a 766-residue protein sequence, read N- to C-terminus: Protein sak1 (766 aa).

Residues 101-176 constitute a DNA-binding region (RFX-type winged-helix); it reads GICWLKRACE…YHYCGIKLRG (76 aa). Phosphoserine is present on residues Ser-223, Ser-224, and Ser-227. Disordered regions lie at residues 271 to 308 and 708 to 731; these read PQAH…QPTY and LQEH…QQQQ. Over residues 279–289 the composition is skewed to polar residues; that stretch reads HLSQSNVPPQL. Composition is skewed to low complexity over residues 290-308 and 715-731; these read SHSS…QPTY and QQHF…QQQQ.

This sequence belongs to the RFX family.

It is found in the nucleus. In terms of biological role, positively regulates cyclic AMP-dependent protein kinase-mediated exit from the mitotic cell cycle. The sequence is that of Protein sak1 (sak1) from Schizosaccharomyces pombe (strain 972 / ATCC 24843) (Fission yeast).